Consider the following 31-residue polypeptide: Antifungal protein 1 (31 aa).

The protein localises to the secreted. Functionally, antifungal activity against C.albicans ATCC 76615. The polypeptide is Antifungal protein 1 (Musca domestica (House fly)).